A 494-amino-acid polypeptide reads, in one-letter code: MAMSLPGSRRTSAGSRRRTSPPVSVRDAYGTSSLSSSSNSGSYKGSDSSPTPRRSMKYTLCSDNHGIKPPTPEQYLTPLQQKEVCIRHLKARLKDTQDRLQDRDTEIDDLKTQLSRMQEDWIEEECHRVEAQLALKEARKEIKQLKQVIDTVKNNLIDKDKGLQKYFVDINIQNKKLETLLHSMEVAQNGMAKEDGTGESAGGSPARSLTRSSTYTKLSDPAVCGDRQPGDPSSGSAEDGADSGFAAADDTLSRTDALEASSLLSSGVDCGTEETSLHSSFGLGPRFPASNTYEKLLCGMEAGVQASCMQERAIQTDFVQYQPDLDTILEKVTQAQVCGTDPESGDRCPELDAHPSGPRDPNSAVVVTVGDELEAPEPITRGPTPQRPGANPNPGQSVSVVCPMEEEEEAAVAEKEPKSYWSRHYIVDLLAVVVPAVPTVAWLCRSQRRQGQPIYNISSLLRGCCTVALHSIRRISCRSLSQPSPSPAGGGSQL.

Positions 1-75 (MAMSLPGSRR…GIKPPTPEQY (75 aa)) are disordered. Residues 7-49 (GSRRTSAGSRRRTSPPVSVRDAYGTSSLSSSSNSGSYKGSDSS) show a composition bias toward low complexity. Residues 79-161 (LQQKEVCIRH…VKNNLIDKDK (83 aa)) adopt a coiled-coil conformation. 2 disordered regions span residues 191–246 (MAKE…SGFA) and 338–398 (CGTD…GQSV). Ser-200 and Ser-204 each carry phosphoserine. Positions 207-217 (RSLTRSSTYTK) are enriched in polar residues. Thr-214 bears the Phosphothreonine mark. Ser-219 carries the post-translational modification Phosphoserine. Residues 230–246 (GDPSSGSAEDGADSGFA) show a composition bias toward low complexity. Residues 344 to 353 (SGDRCPELDA) are compositionally biased toward basic and acidic residues. Residues 425-444 (YIVDLLAVVVPAVPTVAWLC) traverse the membrane as a helical segment.

As to quaternary structure, binds to STX1A. Interacts with DNM1; this interaction inhibits the binding of DNM1 to AMPH and DNM1-receptor-mediated endocytosis. As to expression, brain specific. Found in synapses.

Its subcellular location is the membrane. It is found in the synapse. The protein resides in the synaptosome. Functionally, inhibits SNARE complex formation by absorbing free STX1A. This chain is Syntaphilin, found in Homo sapiens (Human).